Reading from the N-terminus, the 397-residue chain is Tryptophan synthase beta chain (397 aa).

Position 91 is an N6-(pyridoxal phosphate)lysine (lysine 91).

Belongs to the TrpB family. In terms of assembly, tetramer of two alpha and two beta chains. It depends on pyridoxal 5'-phosphate as a cofactor.

The catalysed reaction is (1S,2R)-1-C-(indol-3-yl)glycerol 3-phosphate + L-serine = D-glyceraldehyde 3-phosphate + L-tryptophan + H2O. It participates in amino-acid biosynthesis; L-tryptophan biosynthesis; L-tryptophan from chorismate: step 5/5. The beta subunit is responsible for the synthesis of L-tryptophan from indole and L-serine. This chain is Tryptophan synthase beta chain, found in Bacillus anthracis (strain A0248).